Reading from the N-terminus, the 31-residue chain is uncharacterized protein (31 aa).

A helical membrane pass occupies residues 7–29; the sequence is TVVLINFFAAVGLFTLISMRFGW.

It is found in the cell inner membrane. This is an uncharacterized protein from Escherichia coli (strain K12).